The sequence spans 437 residues: Sodium/bile acid cotransporter 4 (437 aa).

Residues 1–103 lie on the Extracellular side of the membrane; the sequence is MDGLDNTTRL…PPFWDTPLNH (103 aa). N-linked (GlcNAc...) asparagine glycans are attached at residues asparagine 6, asparagine 20, and asparagine 26. Positions 16 to 84 are disordered; the sequence is LLPDNLTLSP…GGVAGQDSST (69 aa). Low complexity predominate over residues 21-50; it reads LTLSPNASSTSASTLSPLPVTSSPSPGLSL. The chain crosses the membrane as a helical span at residues 104-124; it reads GLNVFVGAALCITMLGLGCTV. The Cytoplasmic segment spans residues 125-140; sequence DVNHFGAHVRRPVGAL. A helical membrane pass occupies residues 141–161; it reads LAALCQFGFLPLLAFLLALAF. Residues 162 to 197 lie on the Extracellular side of the membrane; that stretch reads KLDEVAAVAVLLCGCCPGGNLSNLMSLLVDGDMNLS. 2 N-linked (GlcNAc...) asparagine glycosylation sites follow: asparagine 181 and asparagine 195. A helical transmembrane segment spans residues 198–218; sequence IIMTISSTLLALVLMPLCLWI. The Cytoplasmic segment spans residues 219–233; that stretch reads YSRAWINTPLVQLLP. Residues 234-254 form a helical membrane-spanning segment; sequence LGAVTLTLCSTLIPIGLGVFI. The Extracellular segment spans residues 255–267; the sequence is RYKYNRVADYIVK. Residues 268–288 form a helical membrane-spanning segment; it reads VSLCSLLVTLVVLFIMTGTML. At 289–291 the chain is on the cytoplasmic side; that stretch reads GPE. Residues 292–312 traverse the membrane as a helical segment; it reads LLASIPAAVYVVAIFMPLAGY. Over 313 to 360 the chain is Extracellular; that stretch reads ASGYGLATLFHLPPNCKRTVCLETGSQNVQLCTAILKLAFPPRFIGSM. Residues 361 to 381 traverse the membrane as a helical segment; the sequence is YMFPLLYALFQSAEAGVFVLI. Over 382 to 437 the chain is Cytoplasmic; the sequence is YKMYGSEILHKREALDEDDDTDISYKKLKEEELADTSYGTVGTDDLVLMETTQTSL.

The protein belongs to the bile acid:sodium symporter (BASS) (TC 2.A.28) family. Activated following N-terminal proteolytic cleavage by thrombin and/or proteases. Mainly expressed in the central nervous system cholinergic neurons. Expressed (at protein level) in motor regions of the spinal cord and rhombencephalon, in mesopontine cholinergic neurons, the medial habenula, cholinergic areas of the forebrain, and the gut myenteric plexus.

Its subcellular location is the cell membrane. Its function is as follows. Transporter for bile acids. In Rattus norvegicus (Rat), this protein is Sodium/bile acid cotransporter 4 (Slc10a4).